Here is a 422-residue protein sequence, read N- to C-terminus: Probable isoprenylcysteine alpha-carbonyl methylesterase ICMEL2 (422 aa).

Positions 1–16 (MQLSPERCRPMSENRE) are enriched in basic and acidic residues. Residues 1-55 (MQLSPERCRPMSENREAWSANSEEMELLHGSNRLSSPEHVRRRVSGNSSEDGSPR) are disordered. Helical transmembrane passes span 97-117 (LLAL…VAYL) and 152-172 (VVVF…GSLL). Substrate contacts are provided by residues 158 to 160 (GGA) and 229 to 231 (QSA). Active-site residues include Ser-230, Asp-331, and His-363.

This sequence belongs to the AB hydrolase superfamily. Isoprenylcysteine methylesterase family. In terms of tissue distribution, expressed at low levels in flowers and siliques.

Its subcellular location is the endoplasmic reticulum membrane. It localises to the golgi apparatus membrane. The catalysed reaction is [protein]-C-terminal S-[(2E,6E)-farnesyl]-L-cysteine methyl ester + H2O = [protein]-C-terminal S-[(2E,6E)-farnesyl]-L-cysteine + methanol + H(+). In terms of biological role, catalyzes the demethylation of isoprenylcysteine methylesters. May act as a negative regulator of ABA signaling. In Arabidopsis thaliana (Mouse-ear cress), this protein is Probable isoprenylcysteine alpha-carbonyl methylesterase ICMEL2.